The following is a 343-amino-acid chain: 7-epi-alpha-eudesmol synthase ((2E,6E)-farnesyl diphosphate cyclizing) (343 aa).

Asp80 and Asp84 together coordinate Mg(2+). The DDXXD motif motif lies at 80–84 (DDQFD). Arg177 lines the substrate pocket. Mg(2+) is bound by residues Asn223 and Ser227. Arg230 contacts substrate. Mg(2+) is bound at residue Glu231. 317–318 (RY) is a substrate binding site.

This sequence belongs to the terpene synthase family. Requires Mg(2+) as cofactor.

The catalysed reaction is (2E,6E)-farnesyl diphosphate + H2O = 7-epi-alpha-eudesmol + diphosphate. It participates in secondary metabolite biosynthesis; terpenoid biosynthesis. In terms of biological role, catalyzes the conversion of (2E,6E)-farnesyl diphosphate (FPP) to yield the bicyclic sesquiterpenol 7-epi-alpha-eudesmol via a 1,10-cyclization, which requires the abstraction of the pyrophosphate from FPP to yield the (E,E)-germacradienyl cation. The only accepted substrate is (2E,6E)-farnesyl diphosphate (FPP). This chain is 7-epi-alpha-eudesmol synthase ((2E,6E)-farnesyl diphosphate cyclizing), found in Streptomyces viridochromogenes (strain DSM 40736 / JCM 4977 / BCRC 1201 / Tue 494).